The primary structure comprises 332 residues: Glycerol-3-phosphate dehydrogenase [NAD(P)+] (332 aa).

S11, W12, R32, R33, and K106 together coordinate NADPH. The sn-glycerol 3-phosphate site is built by K106 and G136. Residue A140 participates in NADPH binding. Residues K191, D244, S254, R255, and N256 each coordinate sn-glycerol 3-phosphate. K191 serves as the catalytic Proton acceptor. R255 is an NADPH binding site. NADPH contacts are provided by V280 and E282.

Belongs to the NAD-dependent glycerol-3-phosphate dehydrogenase family.

The protein localises to the cytoplasm. It catalyses the reaction sn-glycerol 3-phosphate + NAD(+) = dihydroxyacetone phosphate + NADH + H(+). It carries out the reaction sn-glycerol 3-phosphate + NADP(+) = dihydroxyacetone phosphate + NADPH + H(+). The protein operates within membrane lipid metabolism; glycerophospholipid metabolism. Functionally, catalyzes the reduction of the glycolytic intermediate dihydroxyacetone phosphate (DHAP) to sn-glycerol 3-phosphate (G3P), the key precursor for phospholipid synthesis. The polypeptide is Glycerol-3-phosphate dehydrogenase [NAD(P)+] (Corynebacterium glutamicum (strain R)).